Consider the following 2381-residue polypeptide: Nipped-B-like protein A (2381 aa).

Residues 85–124 (SDELEGDVPVLLQLLMSRNPNIFRNKTAPNTPQYPAQAGI) form an HEAT 1 repeat. Disordered regions lie at residues 131–211 (PPYK…HLQQ), 240–289 (HLLQ…DIVG), and 329–503 (LAAI…ELPP). Residues 138 to 158 (GSMQGSPASANYQQASMSHSP) are compositionally biased toward polar residues. Composition is skewed to basic and acidic residues over residues 254 to 273 (GTKD…KSSE) and 333 to 355 (ERME…DKDK). Positions 373–389 (GTAGSGSGAPGGGGGAN) are enriched in gly residues. The span at 451–473 (VKHEHDHDPEHPHYDDKQPDTPR) shows a compositional bias: basic and acidic residues. Positions 552 to 565 (KKSVKPVVVLQKLS) match the PxVxL motif motif. The segment covering 570-580 (QRLMRERDSRA) has biased composition (basic and acidic residues). 2 disordered regions span residues 570 to 604 (QRLM…SVLK) and 629 to 708 (RKRS…NEVA). Positions 581 to 592 (SKSGKNRLSSGR) are enriched in polar residues. Basic and acidic residues-rich tracts occupy residues 633–642 (TVNERPKYAE) and 658–694 (KDRD…RYDD). 4 HEAT repeats span residues 1299–1337 (SQSF…VDPS), 1375–1413 (PQLT…EQPN), 1477–1516 (YDWF…HILK), and 1843–1881 (LIHP…KYTG). Disordered stretches follow at residues 2005 to 2095 (IPGR…DLDD) and 2228 to 2271 (LLGG…GDSA). The segment covering 2006–2021 (PGRKSRKRRRRRRRPQ) has biased composition (basic residues). Basic and acidic residues predominate over residues 2040–2056 (EEERGAQDEERERHSGD). Acidic residues predominate over residues 2057-2068 (EEYDDDDYEEDE). Positions 2077–2086 (KPTEDIRQSE) are enriched in basic and acidic residues.

It belongs to the SCC2/Nipped-B family.

It localises to the nucleus. May play a structural role in chromatin. Involved in sister chromatid cohesion, possibly by facilitating the cohesin complex loading. Transcription factor, which may promote cortical neuron migration during brain development by regulating the transcription of crucial genes in this process. The protein is Nipped-B-like protein A (nipbla) of Danio rerio (Zebrafish).